A 312-amino-acid polypeptide reads, in one-letter code: Acetyl-coenzyme A carboxylase carboxyl transferase subunit beta (312 aa).

The interval 1 to 52 (MEMDTAVENPAVEKNGQPTPSSTSTATDAAPTPNAPNRPAPNTAGNRKRGVP) is disordered. A compositionally biased stretch (low complexity) spans 18–32 (PTPSSTSTATDAAPT). One can recognise a CoA carboxyltransferase N-terminal domain in the interval 55-312 (VWRKCDSCGA…IATAIDYCGK (258 aa)). Zn(2+) contacts are provided by Cys-59, Cys-62, Cys-78, and Cys-81. Residues 59–81 (CDSCGASLFYKEVQQRLNVCPQC) form a C4-type zinc finger.

This sequence belongs to the AccD/PCCB family. As to quaternary structure, acetyl-CoA carboxylase is a heterohexamer composed of biotin carboxyl carrier protein (AccB), biotin carboxylase (AccC) and two subunits each of ACCase subunit alpha (AccA) and ACCase subunit beta (AccD). Zn(2+) serves as cofactor.

It localises to the cytoplasm. The enzyme catalyses N(6)-carboxybiotinyl-L-lysyl-[protein] + acetyl-CoA = N(6)-biotinyl-L-lysyl-[protein] + malonyl-CoA. The protein operates within lipid metabolism; malonyl-CoA biosynthesis; malonyl-CoA from acetyl-CoA: step 1/1. Functionally, component of the acetyl coenzyme A carboxylase (ACC) complex. Biotin carboxylase (BC) catalyzes the carboxylation of biotin on its carrier protein (BCCP) and then the CO(2) group is transferred by the transcarboxylase to acetyl-CoA to form malonyl-CoA. This is Acetyl-coenzyme A carboxylase carboxyl transferase subunit beta from Rhodopirellula baltica (strain DSM 10527 / NCIMB 13988 / SH1).